The primary structure comprises 179 residues: Large ribosomal subunit protein uL6 (179 aa).

It belongs to the universal ribosomal protein uL6 family. In terms of assembly, part of the 50S ribosomal subunit.

In terms of biological role, this protein binds to the 23S rRNA, and is important in its secondary structure. It is located near the subunit interface in the base of the L7/L12 stalk, and near the tRNA binding site of the peptidyltransferase center. The sequence is that of Large ribosomal subunit protein uL6 from Alkaliphilus metalliredigens (strain QYMF).